The following is a 561-amino-acid chain: Foot protein 1 variant 1 (561 aa).

Positions 1-20 (MARNMNILTLFAVLIGSASA) are cleaved as a signal peptide. Residue tyrosine 22 is modified to 3',4'-dihydroxyphenylalanine. 4-hydroxyproline is present on proline 33. The A-1; approximate repeat unit spans residues 41 to 50 (VHPPAWTAWK). The 13 X 10 AA A-P-P-P-A-W-T-A-W-K stretch occupies residues 41–410 (VHPPAWTAWK…APPPAWTAWK (370 aa)). 7'-hydroxytryptophan occurs at positions 46, 49, 56, and 59. Tryptophan 46, tryptophan 49, tryptophan 56, and tryptophan 59 each carry a C-linked (Man) hydroxytryptophan glycan. One copy of the A-2; approximate repeat lies at 51–60 (AHPPAWTAWK). The stretch at 61 to 70 (ATPKPWTAWK) is one B-1 repeat. Residues 61 to 440 (ATPKPWTAWK…ATPKPWTAWR (380 aa)) are 27 X 10 AA A-T-P-K-P-W-T-A-W-K. Proline 65 carries the 4-hydroxyproline modification. Tryptophan 66 carries C-linked (Man) tryptophan glycosylation. Tryptophan 69 is modified (7'-hydroxytryptophan). C-linked (Man) hydroxytryptophan glycosylation occurs at tryptophan 69. One copy of the A-3 repeat lies at 71–80 (APPPAWTAWK). 3 positions are modified to 4-hydroxyproline: proline 72, proline 73, and proline 74. A 7'-hydroxytryptophan mark is found at tryptophan 76 and tryptophan 79. Residues tryptophan 76 and tryptophan 79 are each glycosylated (C-linked (Man) hydroxytryptophan). One copy of the B-2 repeat lies at 81–90 (ATPKPWTAWK). A 4-hydroxyproline modification is found at proline 85. A C-linked (Man) tryptophan glycan is attached at tryptophan 86. Tryptophan 89 carries the post-translational modification 7'-hydroxytryptophan. Tryptophan 89 carries a C-linked (Man) hydroxytryptophan glycan. An A-4; approximate repeat occupies 91–100 (APPPTWTAWK). 4-hydroxyproline is present on residues proline 92, proline 93, and proline 94. Residues tryptophan 96 and tryptophan 99 each carry the 7'-hydroxytryptophan modification. Residues tryptophan 96 and tryptophan 99 are each glycosylated (C-linked (Man) hydroxytryptophan). A B-3 repeat occupies 101–110 (ATPKPWTAWK). Proline 105 carries the 4-hydroxyproline modification. C-linked (Man) tryptophan glycosylation is present at tryptophan 106. Position 109 is a 7'-hydroxytryptophan (tryptophan 109). Tryptophan 109 carries a C-linked (Man) hydroxytryptophan glycan. The A-5 repeat unit spans residues 111–120 (APPPAWTAWK). 3 positions are modified to 4-hydroxyproline: proline 112, proline 113, and proline 114. 7'-hydroxytryptophan occurs at positions 116 and 119. Residues tryptophan 116 and tryptophan 119 are each glycosylated (C-linked (Man) hydroxytryptophan). One copy of the B-4; approximate repeat lies at 121-130 (ATLKPWTAWK). At proline 125 the chain carries 4-hydroxyproline. The C-linked (Man) tryptophan glycan is linked to tryptophan 126. Tryptophan 129 bears the 7'-hydroxytryptophan mark. Tryptophan 129 carries a C-linked (Man) hydroxytryptophan glycan. Residues 131–140 (ATPKPWTAWK) form a B-5 repeat. Proline 135 is modified (4-hydroxyproline). C-linked (Man) tryptophan glycosylation is present at tryptophan 136. Tryptophan 139 bears the 7'-hydroxytryptophan mark. Residue tryptophan 139 is glycosylated (C-linked (Man) hydroxytryptophan). One copy of the B-6 repeat lies at 141–150 (ATPKPWTAWK). At proline 145 the chain carries 4-hydroxyproline. The C-linked (Man) tryptophan glycan is linked to tryptophan 146. A 7'-hydroxytryptophan modification is found at tryptophan 149. C-linked (Man) hydroxytryptophan glycosylation is present at tryptophan 149. The B-7 repeat unit spans residues 151–160 (ATPKPWTAWK). Proline 155 bears the 4-hydroxyproline mark. A C-linked (Man) tryptophan glycan is attached at tryptophan 156. 7'-hydroxytryptophan is present on tryptophan 159. Tryptophan 159 carries a C-linked (Man) hydroxytryptophan glycan. The stretch at 161-170 (ATPKPWTAWK) is one B-8 repeat. At proline 165 the chain carries 4-hydroxyproline. Tryptophan 166 carries C-linked (Man) tryptophan glycosylation. Position 169 is a 7'-hydroxytryptophan (tryptophan 169). Tryptophan 169 is a glycosylation site (C-linked (Man) hydroxytryptophan). A B-9; approximate repeat occupies 171 to 180 (ATPKPWTVWK). 4-hydroxyproline is present on proline 175. C-linked (Man) tryptophan glycosylation is present at tryptophan 176. A 7'-hydroxytryptophan modification is found at tryptophan 179. Tryptophan 179 carries a C-linked (Man) hydroxytryptophan glycan. Residues 181–190 (ATPKPWTAWK) form a B-10 repeat. Proline 185 is subject to 4-hydroxyproline. The C-linked (Man) tryptophan glycan is linked to tryptophan 186. Position 189 is a 7'-hydroxytryptophan (tryptophan 189). Tryptophan 189 carries C-linked (Man) hydroxytryptophan glycosylation. Residues 191-200 (ATPKPWTAWK) form a B-11 repeat. Proline 195 bears the 4-hydroxyproline mark. A C-linked (Man) tryptophan glycan is attached at tryptophan 196. Position 199 is a 7'-hydroxytryptophan (tryptophan 199). C-linked (Man) hydroxytryptophan glycosylation is present at tryptophan 199. Residues 201–210 (APPPAWSAWK) form an A-6; approximate repeat. 3 positions are modified to 4-hydroxyproline: proline 202, proline 203, and proline 204. Tryptophan 206 and tryptophan 209 each carry 7'-hydroxytryptophan. Tryptophan 206 and tryptophan 209 each carry a C-linked (Man) hydroxytryptophan glycan. A B-12; approximate repeat occupies 211 to 220 (ATPKPWTVWK). The residue at position 215 (proline 215) is a 4-hydroxyproline. The C-linked (Man) tryptophan glycan is linked to tryptophan 216. A 7'-hydroxytryptophan modification is found at tryptophan 219. Tryptophan 219 is a glycosylation site (C-linked (Man) hydroxytryptophan). A B-13 repeat occupies 221–230 (ATPKPWTAWK). Residue proline 225 is modified to 4-hydroxyproline. Tryptophan 226 carries a C-linked (Man) tryptophan glycan. Tryptophan 229 carries the post-translational modification 7'-hydroxytryptophan. Tryptophan 229 carries C-linked (Man) hydroxytryptophan glycosylation. Residues 231–240 (ATPKPWTAWK) form a B-14 repeat. Proline 235 is modified (4-hydroxyproline). A C-linked (Man) tryptophan glycan is attached at tryptophan 236. A 7'-hydroxytryptophan modification is found at tryptophan 239. C-linked (Man) hydroxytryptophan glycosylation is present at tryptophan 239. One copy of the B-15; approximate repeat lies at 241 to 250 (ATPKPWTVWK). Position 245 is a 4-hydroxyproline (proline 245). The C-linked (Man) tryptophan glycan is linked to tryptophan 246. The residue at position 249 (tryptophan 249) is a 7'-hydroxytryptophan. Residue tryptophan 249 is glycosylated (C-linked (Man) hydroxytryptophan). The B-16 repeat unit spans residues 251–260 (ATPKPWTAWK). Proline 255 carries the post-translational modification 4-hydroxyproline. Tryptophan 256 carries C-linked (Man) tryptophan glycosylation. 7'-hydroxytryptophan is present on tryptophan 259. A glycan (C-linked (Man) hydroxytryptophan) is linked at tryptophan 259. Residues 261–270 (APPPAWTAWK) form an A-7 repeat. Residues proline 262, proline 263, and proline 264 each carry the 4-hydroxyproline modification. 2 positions are modified to 7'-hydroxytryptophan: tryptophan 266 and tryptophan 269. Tryptophan 266 and tryptophan 269 each carry a C-linked (Man) hydroxytryptophan glycan. Residues 271–280 (ATPKPWTAWK) form a B-17 repeat. Proline 275 carries the 4-hydroxyproline modification. Tryptophan 276 is a glycosylation site (C-linked (Man) tryptophan). A 7'-hydroxytryptophan modification is found at tryptophan 279. A C-linked (Man) hydroxytryptophan glycan is attached at tryptophan 279. The A-8; approximate repeat unit spans residues 281 to 290 (APPPTWTAWK). Residues proline 282, proline 283, and proline 284 each carry the 4-hydroxyproline modification. 7'-hydroxytryptophan is present on residues tryptophan 286 and tryptophan 289. Tryptophan 286 and tryptophan 289 each carry a C-linked (Man) hydroxytryptophan glycan. One copy of the B-18 repeat lies at 291–300 (ATPKPWTAWK). Proline 295 carries the 4-hydroxyproline modification. Tryptophan 296 is a glycosylation site (C-linked (Man) tryptophan). 7'-hydroxytryptophan is present on tryptophan 299. Residue tryptophan 299 is glycosylated (C-linked (Man) hydroxytryptophan). The A-9; approximate repeat unit spans residues 301–310 (APPPAWSAWK). A 4-hydroxyproline mark is found at proline 302, proline 303, and proline 304. 2 positions are modified to 7'-hydroxytryptophan: tryptophan 306 and tryptophan 309. 2 C-linked (Man) hydroxytryptophan glycosylation sites follow: tryptophan 306 and tryptophan 309. One copy of the B-19 repeat lies at 311–320 (ATPKPWTAWK). Proline 315 bears the 4-hydroxyproline mark. Tryptophan 316 carries a C-linked (Man) tryptophan glycan. 7'-hydroxytryptophan is present on tryptophan 319. A glycan (C-linked (Man) hydroxytryptophan) is linked at tryptophan 319. The B-20 repeat unit spans residues 321-330 (ATPKPWTAWK). Proline 325 carries the post-translational modification 4-hydroxyproline. C-linked (Man) tryptophan glycosylation is present at tryptophan 326. A 7'-hydroxytryptophan modification is found at tryptophan 329. C-linked (Man) hydroxytryptophan glycosylation occurs at tryptophan 329. Residues 331 to 340 (ATPKPWTAWK) form a B-21 repeat. 4-hydroxyproline is present on proline 335. Tryptophan 336 carries C-linked (Man) tryptophan glycosylation. 7'-hydroxytryptophan is present on tryptophan 339. A glycan (C-linked (Man) hydroxytryptophan) is linked at tryptophan 339. A B-22 repeat occupies 341-350 (ATPKPWTAWK). Proline 345 is modified (4-hydroxyproline). C-linked (Man) tryptophan glycosylation is present at tryptophan 346. Tryptophan 349 carries the post-translational modification 7'-hydroxytryptophan. C-linked (Man) hydroxytryptophan glycosylation is present at tryptophan 349. Residues 351–360 (VPPPAWTAWK) form an A-10; approximate repeat. A 4-hydroxyproline mark is found at proline 352, proline 353, and proline 354. A 7'-hydroxytryptophan mark is found at tryptophan 356, tryptophan 359, tryptophan 366, and tryptophan 369. C-linked (Man) hydroxytryptophan glycans are attached at residues tryptophan 356, tryptophan 359, tryptophan 366, and tryptophan 369. One copy of the A-11; approximate repeat lies at 361-370 (AHPPAWTAWK). Residues 371 to 380 (ATPKPWTAWK) form a B-23 repeat. Proline 375 is subject to 4-hydroxyproline. Tryptophan 376 is a glycosylation site (C-linked (Man) tryptophan). A 7'-hydroxytryptophan modification is found at tryptophan 379. Tryptophan 379 carries a C-linked (Man) hydroxytryptophan glycan. The stretch at 381-390 (APPPAWTAWK) is one A-12 repeat. Residues proline 382, proline 383, and proline 384 each carry the 4-hydroxyproline modification. Tryptophan 386 and tryptophan 389 each carry 7'-hydroxytryptophan. 2 C-linked (Man) hydroxytryptophan glycosylation sites follow: tryptophan 386 and tryptophan 389. One copy of the B-24 repeat lies at 391–400 (ATPKPWTAWK). Proline 395 carries the 4-hydroxyproline modification. A C-linked (Man) tryptophan glycan is attached at tryptophan 396. Residue tryptophan 399 is modified to 7'-hydroxytryptophan. Tryptophan 399 is a glycosylation site (C-linked (Man) hydroxytryptophan). The A-13 repeat unit spans residues 401–410 (APPPAWTAWK). 4-hydroxyproline occurs at positions 402, 403, and 404. 7'-hydroxytryptophan is present on residues tryptophan 406 and tryptophan 409. Tryptophan 406 and tryptophan 409 each carry a C-linked (Man) hydroxytryptophan glycan. Residues 411-420 (ATPKPWTAWK) form a B-25 repeat. Proline 415 carries the 4-hydroxyproline modification. A C-linked (Man) tryptophan glycan is attached at tryptophan 416. Tryptophan 419 is modified (7'-hydroxytryptophan). C-linked (Man) hydroxytryptophan glycosylation occurs at tryptophan 419. One copy of the B-26; approximate repeat lies at 421-430 (ATPKPWTVWK). Proline 425 bears the 4-hydroxyproline mark. C-linked (Man) tryptophan glycosylation is present at tryptophan 426. Tryptophan 429 bears the 7'-hydroxytryptophan mark. Tryptophan 429 carries C-linked (Man) hydroxytryptophan glycosylation. The stretch at 431 to 440 (ATPKPWTAWR) is one B-27; approximate repeat. A 4-hydroxyproline modification is found at proline 435. A glycan (C-linked (Man) tryptophan) is linked at tryptophan 436. The residue at position 439 (tryptophan 439) is a 7'-hydroxytryptophan. C-linked (Man) hydroxytryptophan glycosylation occurs at tryptophan 439. Positions 452–507 (GHGYGGYGKPGKPGKPGSKGPRGPAGPPGATGKTGRTGATGKRGPPGYPGKPGVPG) are disordered. Residues 453–462 (HGYGGYGKPG) show a composition bias toward gly residues. In terms of domain architecture, Collagen-like spans 459 to 510 (GKPGKPGKPGSKGPRGPAGPPGATGKTGRTGATGKRGPPGYPGKPGVPGRNG). The span at 466–496 (KPGSKGPRGPAGPPGATGKTGRTGATGKRGP) shows a compositional bias: low complexity. 3 positions are modified to 4-hydroxyproline: proline 497, proline 500, and proline 506.

Produced by the byssal gland.

The protein localises to the secreted. Its function is as follows. Provides adhesiveness to the mussel's foot. Mussels produce one of the strongest water insoluble glues. The mussel's adhesive is a bundle of threads, called a byssus, formed by a fibrous collagenous core coated with adhesive proteins. The chain is Foot protein 1 variant 1 from Perna viridis (Asian green mussel).